Here is a 498-residue protein sequence, read N- to C-terminus: L-ornithine N(5)-monooxygenase (498 aa).

FAD contacts are provided by residues 80 to 88 (ERQKQFAWH) and Gln-99. Lys-104 contacts substrate. Residue Val-165 participates in FAD binding. NADP(+) contacts are provided by residues 251–254 (SGQS) and Arg-276. Substrate-binding positions include 290 to 293 (NEVF) and Asn-320. An NADP(+)-binding site is contributed by 320–322 (NYS). Position 463-465 (463-465 (SLL)) interacts with FAD. Ser-466 contacts substrate.

It belongs to the lysine N(6)-hydroxylase/L-ornithine N(5)-oxygenase family. Homotetramer. The cofactor is FAD.

The enzyme catalyses L-ornithine + NADPH + O2 = N(5)-hydroxy-L-ornithine + NADP(+) + H2O. It catalyses the reaction L-ornithine + NADH + O2 = N(5)-hydroxy-L-ornithine + NAD(+) + H2O. Its pathway is siderophore biosynthesis. Functionally, catalyzes the conversion of L-ornithine to N(5)-hydroxyornithine, the first step in the biosynthesis of all hydroxamate-containing siderophores, such as the secreted triacetylfusarinine C (TAFC) involved in iron uptake and the intracellular iron storage compound desferriferricrocin (DFFC). This Emericella nidulans (strain FGSC A4 / ATCC 38163 / CBS 112.46 / NRRL 194 / M139) (Aspergillus nidulans) protein is L-ornithine N(5)-monooxygenase.